Consider the following 195-residue polypeptide: Imidazoleglycerol-phosphate dehydratase (195 aa).

This sequence belongs to the imidazoleglycerol-phosphate dehydratase family.

It localises to the cytoplasm. The enzyme catalyses D-erythro-1-(imidazol-4-yl)glycerol 3-phosphate = 3-(imidazol-4-yl)-2-oxopropyl phosphate + H2O. Its pathway is amino-acid biosynthesis; L-histidine biosynthesis; L-histidine from 5-phospho-alpha-D-ribose 1-diphosphate: step 6/9. The chain is Imidazoleglycerol-phosphate dehydratase from Trichlorobacter lovleyi (strain ATCC BAA-1151 / DSM 17278 / SZ) (Geobacter lovleyi).